A 432-amino-acid polypeptide reads, in one-letter code: Adenylosuccinate synthetase (432 aa).

GTP-binding positions include 13 to 19 (GDEGKGK) and 41 to 43 (GHT). Asp-14 functions as the Proton acceptor in the catalytic mechanism. Residues Asp-14 and Gly-41 each contribute to the Mg(2+) site. IMP contacts are provided by residues 14-17 (DEGK), 39-42 (NAGH), Thr-130, Arg-144, Gln-225, Thr-240, and Arg-304. The Proton donor role is filled by His-42. Position 300 to 306 (300 to 306 (ATTGRSR)) interacts with substrate. GTP-binding positions include Arg-306, 332 to 334 (KLD), and 415 to 417 (STG).

The protein belongs to the adenylosuccinate synthetase family. Homodimer. Mg(2+) is required as a cofactor.

It localises to the cytoplasm. The enzyme catalyses IMP + L-aspartate + GTP = N(6)-(1,2-dicarboxyethyl)-AMP + GDP + phosphate + 2 H(+). Its pathway is purine metabolism; AMP biosynthesis via de novo pathway; AMP from IMP: step 1/2. Plays an important role in the de novo pathway of purine nucleotide biosynthesis. Catalyzes the first committed step in the biosynthesis of AMP from IMP. The chain is Adenylosuccinate synthetase from Yersinia pestis bv. Antiqua (strain Antiqua).